The chain runs to 389 residues: Histidinol-phosphate aminotransferase (389 aa).

At Lys-233 the chain carries N6-(pyridoxal phosphate)lysine.

It belongs to the class-II pyridoxal-phosphate-dependent aminotransferase family. Pyridoxal 5'-phosphate is required as a cofactor.

It catalyses the reaction L-histidinol phosphate + 2-oxoglutarate = 3-(imidazol-4-yl)-2-oxopropyl phosphate + L-glutamate. It functions in the pathway amino-acid biosynthesis; L-histidine biosynthesis; L-histidine from 5-phospho-alpha-D-ribose 1-diphosphate: step 7/9. The chain is Histidinol-phosphate aminotransferase (HIS5) from Candida maltosa (Yeast).